A 402-amino-acid chain; its full sequence is Leucine aminopeptidase 1 (402 aa).

The signal sequence occupies residues Met1 to Ala18. Positions Arg19–Lys92 are excised as a propeptide. Residues Asn111 and Asn184 are each glycosylated (N-linked (GlcNAc...) asparagine). Zn(2+) is bound by residues His192, Asp211, Glu250, and Asp277. N-linked (GlcNAc...) asparagine glycosylation occurs at Asn304. Cysteines 326 and 330 form a disulfide. His359 lines the Zn(2+) pocket.

Belongs to the peptidase M28 family. M28E subfamily. Monomer. Zn(2+) serves as cofactor.

Its subcellular location is the secreted. Extracellular aminopeptidase that allows assimilation of proteinaceous substrates. The protein is Leucine aminopeptidase 1 (lap1) of Neurospora crassa (strain ATCC 24698 / 74-OR23-1A / CBS 708.71 / DSM 1257 / FGSC 987).